Here is a 310-residue protein sequence, read N- to C-terminus: MKTLTRKLSRTAITLVLVILAFIAIFRAWVYYTESPWTRDARFSADVVAIAPDVAGLITNVSVHDNQLVKKDQILFTIDQPRYKKALEEAEADVAYYQVLAQEKRQEAGRRNRLGVQAMSREEIDQANNVLQTVLHQLAKAQATRDLAKLDLERTVIRAPADGWVTNLNVYTGEFITRGSTAVALVKQHSFYVLAYMEETKLEGVRPGYRAEITPLGSNKVLKGTVDSVAAGVTNASSTRDAKGMATIDSNLEWVRLAQRVPVRIRLDDQQDNLWPAGTTATVVITGKQDRDETQDSFFRKMAHRLREFG.

Residues A12 to Y32 traverse the membrane as a helical segment.

This sequence belongs to the membrane fusion protein (MFP) (TC 8.A.1) family.

It localises to the cell inner membrane. In terms of biological role, forms an efflux pump with AaeB. The protein is p-hydroxybenzoic acid efflux pump subunit AaeA of Citrobacter koseri (strain ATCC BAA-895 / CDC 4225-83 / SGSC4696).